The sequence spans 274 residues: Diaminopimelate epimerase (274 aa).

Asn-11, Gln-44, and Asn-64 together coordinate substrate. Catalysis depends on Cys-73, which acts as the Proton donor. Residues 74–75 (GN), Asn-157, Asn-190, and 208–209 (ER) contribute to the substrate site. Cys-217 (proton acceptor) is an active-site residue. 218 to 219 (GS) is a substrate binding site.

It belongs to the diaminopimelate epimerase family. Homodimer.

The protein resides in the cytoplasm. It catalyses the reaction (2S,6S)-2,6-diaminopimelate = meso-2,6-diaminopimelate. Its pathway is amino-acid biosynthesis; L-lysine biosynthesis via DAP pathway; DL-2,6-diaminopimelate from LL-2,6-diaminopimelate: step 1/1. Catalyzes the stereoinversion of LL-2,6-diaminopimelate (L,L-DAP) to meso-diaminopimelate (meso-DAP), a precursor of L-lysine and an essential component of the bacterial peptidoglycan. This is Diaminopimelate epimerase from Mannheimia succiniciproducens (strain KCTC 0769BP / MBEL55E).